Consider the following 1774-residue polypeptide: U3 small nucleolar RNA-associated protein 10 (1774 aa).

The disordered stretch occupies residues 1209 to 1228 (TEQGKSDGDESGSEPDNDNP). One copy of the HEAT repeat lies at 1734 to 1772 (LVPVIAELLEDDDEEVEQEVRTGLVKVVETVLGEPFDRY).

It belongs to the HEATR1/UTP10 family. Component of the ribosomal small subunit (SSU) processome.

It localises to the nucleus. It is found in the nucleolus. Functionally, involved in nucleolar processing of pre-18S ribosomal RNA. Involved in ribosome biosynthesis. In Eremothecium gossypii (strain ATCC 10895 / CBS 109.51 / FGSC 9923 / NRRL Y-1056) (Yeast), this protein is U3 small nucleolar RNA-associated protein 10.